The primary structure comprises 546 residues: (-)-5-epieremophilene synthase STPS1 (546 aa).

The Mg(2+) site is built by Asp299, Asp303, Asp442, Thr446, and Glu450. The DDXXD motif signature appears at 299-303; it reads DDTYD.

Belongs to the terpene synthase family. Tpsa subfamily. In terms of assembly, monomer. It depends on Mg(2+) as a cofactor. In terms of tissue distribution, highly expressed in leaves and at lower levels in flowers.

The catalysed reaction is (2E,6E)-farnesyl diphosphate = (-)-5-epi-eremophilene + diphosphate. The protein operates within secondary metabolite biosynthesis; terpenoid biosynthesis. Its function is as follows. Sesquiterpene synthase that catalyzes the conversion of farnesyl diphosphate to (-)-5-epi-eremophilene. The sequence is that of (-)-5-epieremophilene synthase STPS1 from Salvia miltiorrhiza (Chinese sage).